The following is a 461-amino-acid chain: TWiK family of potassium channels protein 18 (461 aa).

The Cytoplasmic portion of the chain corresponds to 1-21 (MAIVAQGVSTILTTFQKTFKG). Residues 22-42 (LLPLIILVAYTLLGAWIFWMI) traverse the membrane as a helical segment. Asn-88 is a glycosylation site (N-linked (GlcNAc...) asparagine). Positions 116–136 (FLGSIFYCMTVYTTIGYGNIV) form an intramembrane region, pore-forming. The helical transmembrane segment at 144 to 164 (FATILYAFIGIPLTVLSLYCL) threads the bilayer. At 165-224 (GSLFAKGCKMLWRFFLKSTRVVSKDLSNKISEAADNIEEGTTAITPSAEKTENNDDDLLS) the chain is on the cytoplasmic side. A helical transmembrane segment spans residues 225–245 (FPISGLLLITVIWVIFCAVLF). The pore-forming intramembrane region spans 253–273 (FGTSLYFTLISFTTIGFGDIL). The chain crosses the membrane as a helical span at residues 281–301 (PIVGVLLLIGLSLVSTVMTLI). At 302-461 (QQQIEALASG…GNEDYLEHDI (160 aa)) the chain is on the cytoplasmic side. The interval 328 to 347 (REDGEVDEHVDPEEDPENNK) is disordered.

The protein belongs to the two pore domain potassium channel (TC 1.A.1.8) family. In terms of tissue distribution, expressed in body wall muscle.

It is found in the membrane. Outwardly rectifying potassium channel protein; activity is sharply augmented by increase in temperature. This chain is TWiK family of potassium channels protein 18 (twk-18), found in Caenorhabditis elegans.